A 173-amino-acid polypeptide reads, in one-letter code: Terpene cyclase subB (173 aa).

4 consecutive transmembrane segments (helical) span residues 11 to 31 (PGYLEVAWIADTCKLLMGLGW), 51 to 71 (ALMPLCCNFAWELTYAVIYPF), 112 to 132 (LPFIFIICIAAWTTAHLALAL), and 141 to 161 (AFSAYGCQLLLSVGALCQLLS).

Belongs to the paxB family.

It localises to the membrane. It functions in the pathway secondary metabolite biosynthesis; terpenoid biosynthesis. Terpene cyclase; part of the gene cluster that mediates the biosynthesis of the immunosuppressants subglutinols, meroterpenoids consisting of an alpha-pyrone (4-hydroxy-5,6-dimethyl-2-pyrone) moiety attached to a decalin core fused to a five-membered cyclic ether carrying a prenylside chain. The first step of the pathway is the synthesis of the alpha-pyrone moiety by the polyketide synthase subA via condensation of one acetyl-CoA starter unit with 3 malonyl-CoA units and 2 methylations. The alpha-pyrone is then combined with geranylgeranyl pyrophosphate (GGPP) formed by the GGPP synthase subD through the action of the prenyltransferase subC to yield a linear alpha-pyrone diterpenoid. Subsequent steps in the subglutinol biosynthetic pathway involve the decalin core formation, which is thought to be initiated by the epoxidation of the C10-C11 olefin by the FAD-dependent oxidoreductase subE. The following cyclization cascade would be catalyzed by the terpene cyclase subB. Lastly, the FAD-dependent dehydrogenase subF probably catalyzes the five-membered cyclic ether formation to complete the formation of subglutinol A. Subsequent redox reactions appear to give rise to subglutinol C and D, however, it remains unclear which enzymes are responsible for these transformations. SubD may have secondary function in the conversion of the identified subglutinols to subglutinol analog 45, which seems to be the major product of the cluster. The chain is Terpene cyclase subB from Metarhizium robertsii (strain ARSEF 23 / ATCC MYA-3075) (Metarhizium anisopliae (strain ARSEF 23)).